A 658-amino-acid polypeptide reads, in one-letter code: UvrABC system protein C (658 aa).

The region spanning 62–140 (PKPGVYRMLD…IKRFRPPYNV (79 aa)) is the GIY-YIG domain. The UVR domain occupies 250–285 (GAVQREIEAQMHKAAEDLDFERAAMLRDRLRAATFI).

The protein belongs to the UvrC family. Interacts with UvrB in an incision complex.

The protein resides in the cytoplasm. Functionally, the UvrABC repair system catalyzes the recognition and processing of DNA lesions. UvrC both incises the 5' and 3' sides of the lesion. The N-terminal half is responsible for the 3' incision and the C-terminal half is responsible for the 5' incision. The chain is UvrABC system protein C from Novosphingobium aromaticivorans (strain ATCC 700278 / DSM 12444 / CCUG 56034 / CIP 105152 / NBRC 16084 / F199).